A 129-amino-acid polypeptide reads, in one-letter code: Glycine cleavage system H protein (129 aa).

In terms of domain architecture, Lipoyl-binding spans 24-106 (TYTVGITEHA…YTDGWIFKIR (83 aa)). Lys-65 carries the post-translational modification N6-lipoyllysine.

It belongs to the GcvH family. The glycine cleavage system is composed of four proteins: P, T, L and H. The cofactor is (R)-lipoate.

In terms of biological role, the glycine cleavage system catalyzes the degradation of glycine. The H protein shuttles the methylamine group of glycine from the P protein to the T protein. This Enterobacter sp. (strain 638) protein is Glycine cleavage system H protein.